The following is a 70-amino-acid chain: uncharacterized protein (70 aa).

To M.pneumoniae MPN377.

This is an uncharacterized protein from Ureaplasma parvum serovar 3 (strain ATCC 700970).